The primary structure comprises 331 residues: MTFEKVGVIGAGAWGTALAQVAARAGLAVTLQAREPEIVAAINDTHENAVFLPGIALEPGIKAVADLADLADCDLILAVAPAQHLRAALTAFAPHRKAGAPVVLCSKGVEQGSLKLMTDVAAEALPGAPIAVLSGPSFAGEVARNLPAAVTLACEDEALGRAIAEAIAIPTFRPYTANDLIGAEAGGAVKNVLAIACGIVEGKGLGRNAHATVITRGFAELTRLAVALGARPETVAGLCGLGDLVLTCSSPQSRNMSVGLALGQGLTLEQALAGKVSVAEGVASAPAVRALARKVGVEAPICEAVAAILAGEVAVDAAIAGLLSRPLKPEA.

Residues Trp14, Arg34, and Lys107 each coordinate NADPH. Sn-glycerol 3-phosphate contacts are provided by Lys107, Gly135, and Ser137. Position 139 (Ala139) interacts with NADPH. 5 residues coordinate sn-glycerol 3-phosphate: Lys190, Asp243, Ser253, Arg254, and Asn255. The active-site Proton acceptor is Lys190. Residue Arg254 participates in NADPH binding. NADPH-binding residues include Val278 and Glu280.

It belongs to the NAD-dependent glycerol-3-phosphate dehydrogenase family.

The protein resides in the cytoplasm. The catalysed reaction is sn-glycerol 3-phosphate + NAD(+) = dihydroxyacetone phosphate + NADH + H(+). It carries out the reaction sn-glycerol 3-phosphate + NADP(+) = dihydroxyacetone phosphate + NADPH + H(+). It functions in the pathway membrane lipid metabolism; glycerophospholipid metabolism. In terms of biological role, catalyzes the reduction of the glycolytic intermediate dihydroxyacetone phosphate (DHAP) to sn-glycerol 3-phosphate (G3P), the key precursor for phospholipid synthesis. The chain is Glycerol-3-phosphate dehydrogenase [NAD(P)+] from Caulobacter vibrioides (strain ATCC 19089 / CIP 103742 / CB 15) (Caulobacter crescentus).